A 287-amino-acid chain; its full sequence is Urease accessory protein UreD (287 aa).

The protein belongs to the UreD family. As to quaternary structure, ureD, UreF and UreG form a complex that acts as a GTP-hydrolysis-dependent molecular chaperone, activating the urease apoprotein by helping to assemble the nickel containing metallocenter of UreC. The UreE protein probably delivers the nickel.

It is found in the cytoplasm. Its function is as follows. Required for maturation of urease via the functional incorporation of the urease nickel metallocenter. The protein is Urease accessory protein UreD of Aliivibrio fischeri (strain ATCC 700601 / ES114) (Vibrio fischeri).